The sequence spans 157 residues: Ribosomal RNA large subunit methyltransferase H (157 aa).

S-adenosyl-L-methionine-binding positions include L74, G106, and 125–130 (LSDMTL).

Belongs to the RNA methyltransferase RlmH family. In terms of assembly, homodimer.

Its subcellular location is the cytoplasm. The enzyme catalyses pseudouridine(1915) in 23S rRNA + S-adenosyl-L-methionine = N(3)-methylpseudouridine(1915) in 23S rRNA + S-adenosyl-L-homocysteine + H(+). Functionally, specifically methylates the pseudouridine at position 1915 (m3Psi1915) in 23S rRNA. In Desulfovibrio desulfuricans (strain ATCC 27774 / DSM 6949 / MB), this protein is Ribosomal RNA large subunit methyltransferase H.